Consider the following 706-residue polypeptide: Fatty acid oxidation complex subunit alpha (706 aa).

An enoyl-CoA hydratase region spans residues 1 to 188 (MEKTFNLTRR…KMGLVNDVVP (188 aa)). Positions 308–706 (RKVKKAVILG…TMAQENAHFF (399 aa)) are 3-hydroxyacyl-CoA dehydrogenase.

This sequence in the N-terminal section; belongs to the enoyl-CoA hydratase/isomerase family. It in the central section; belongs to the 3-hydroxyacyl-CoA dehydrogenase family. Heterotetramer of two alpha chains (FadJ) and two beta chains (FadI).

It localises to the cytoplasm. It carries out the reaction a (3S)-3-hydroxyacyl-CoA = a (2E)-enoyl-CoA + H2O. It catalyses the reaction a 4-saturated-(3S)-3-hydroxyacyl-CoA = a (3E)-enoyl-CoA + H2O. The catalysed reaction is a (3S)-3-hydroxyacyl-CoA + NAD(+) = a 3-oxoacyl-CoA + NADH + H(+). The enzyme catalyses (3S)-3-hydroxybutanoyl-CoA = (3R)-3-hydroxybutanoyl-CoA. Its pathway is lipid metabolism; fatty acid beta-oxidation. Its function is as follows. Catalyzes the formation of a hydroxyacyl-CoA by addition of water on enoyl-CoA. Also exhibits 3-hydroxyacyl-CoA epimerase and 3-hydroxyacyl-CoA dehydrogenase activities. In Shewanella baltica (strain OS185), this protein is Fatty acid oxidation complex subunit alpha.